Consider the following 292-residue polypeptide: uncharacterized protein (292 aa).

One can recognise an HTH lysR-type domain in the interval 1–58 (MEWEQLEYFQTLARMQHVTKAAKSLSITQPALSRSIARLENHLGVPLFDRQGRSISLN). The segment at residues 18–37 (VTKAAKSLSITQPALSRSIA) is a DNA-binding region (H-T-H motif).

It belongs to the LysR transcriptional regulatory family.

This is an uncharacterized protein from Bacillus subtilis (strain 168).